The primary structure comprises 331 residues: 6-phosphogluconolactonase (331 aa).

N6-acetyllysine is present on K287.

This sequence belongs to the cycloisomerase 2 family.

The enzyme catalyses 6-phospho-D-glucono-1,5-lactone + H2O = 6-phospho-D-gluconate + H(+). Its pathway is carbohydrate degradation; pentose phosphate pathway; D-ribulose 5-phosphate from D-glucose 6-phosphate (oxidative stage): step 2/3. Catalyzes the hydrolysis of 6-phosphogluconolactone to 6-phosphogluconate. The sequence is that of 6-phosphogluconolactonase from Escherichia coli O139:H28 (strain E24377A / ETEC).